Here is a 141-residue protein sequence, read N- to C-terminus: Hemoglobin subunit alpha-1 (141 aa).

The Globin domain maps to 1–141; it reads VLSPEDKNNV…VSTVLTSKYR (141 aa). H58 contributes to the O2 binding site. Heme b is bound at residue H87.

This sequence belongs to the globin family. Heterotetramer of two alpha chains and two beta chains. In terms of tissue distribution, red blood cells.

Its function is as follows. Involved in oxygen transport from the lung to the various peripheral tissues. The polypeptide is Hemoglobin subunit alpha-1 (Tadarida brasiliensis (Brazilian free-tailed bat)).